The primary structure comprises 212 residues: Adenylate kinase (212 aa).

10–15 (GAGKGT) is a binding site for ATP. The NMP stretch occupies residues 30–59 (STGDMFRAAIANQTEMGVLAKSYIDKGELV). AMP is bound by residues Thr31, Arg36, 57-59 (ELV), 86-89 (GYPR), and Gln93. Positions 127–159 (GRIIHRETGETFHKVFNPPADYKEEDYYQREDD) are LID. ATP contacts are provided by residues Arg128 and 137-138 (TF). AMP contacts are provided by Arg156 and Arg167. Gln195 serves as a coordination point for ATP.

The protein belongs to the adenylate kinase family. In terms of assembly, monomer.

It localises to the cytoplasm. The catalysed reaction is AMP + ATP = 2 ADP. Its pathway is purine metabolism; AMP biosynthesis via salvage pathway; AMP from ADP: step 1/1. Its function is as follows. Catalyzes the reversible transfer of the terminal phosphate group between ATP and AMP. Plays an important role in cellular energy homeostasis and in adenine nucleotide metabolism. The polypeptide is Adenylate kinase (Streptococcus sanguinis (strain SK36)).